We begin with the raw amino-acid sequence, 725 residues long: MAMAMSDSGASRLRRQLESGGFEARLYVKQLSQQSDGDRDLQEHRQRIQALAEETAQNLKRNVYQNYRQFIETAREISYLESEMYQLSHLLTEQKSSLESIPLTLLPAAAAAGAAAASGGEEGGGGAGGRDQLRGQTGFFPSPGGASRDGSGPGEEGKQRTLTTLLEKVEGCRHLLETPGQYLVYNGDLVEYEADHMAQLQRVHGFLMNDCLLVATWLPQRRGMYRYNALYPLDGLAVVNVKDNPPMKDMFKLLMFPESRIFQAENAKIKREWLEVLEETKRALSEKRRREQEEAAAPRGPPQVTPKASNPFEDEDDDEPTVPEIEEEKVDLSMEWIQELPEDLDVCIAQRDFEGAVDLLDKLNHYLEDKPSPPPVKELRARVDERVRQLTEVLVFELSPDRSLRGGPKATRRAVSQLIRLGQCTKACELFLRNRAAAVHTAIRQLRIEGATLLYIHKLCHVFFTSLLETAREFETDFAGTDSGCYSAFVVWARSAMGMFVDAFSKQVFDSKESLSTAAECVRVAKEHCQQLGDIGLDLTFIVHALLVKDIQGALHSYKEIIIEATKHRNSEEMWRRMNLMTPEALGKLKEEMKSCGVSNFEQYTGDDCWVNLSYTVVAFTKQTMGFLEEALKLYFPELHMVLLESLVEIILVAVQHVDYSLRCEQDPEKKAFIRQNASFLYETVLPVVEKRFEEGVGKPAKQLQDLRNASRLIRVNPESTTSVV.

At Ser19 the chain carries Phosphoserine. The interval 116 to 159 (AASGGEEGGGGAGGRDQLRGQTGFFPSPGGASRDGSGPGEEGKQ) is disordered. Over residues 120-129 (GEEGGGGAGG) the composition is skewed to gly residues. In terms of domain architecture, PH spans 182 to 282 (YLVYNGDLVE…WLEVLEETKR (101 aa)). Positions 285 to 322 (SEKRRREQEEAAAPRGPPQVTPKASNPFEDEDDDEPTV) are disordered. Positions 312–322 (FEDEDDDEPTV) are enriched in acidic residues.

The protein belongs to the EXO84 family. The exocyst complex is composed of EXOC1, EXOC2, EXOC3, EXOC4, EXOC5, EXOC6, EXOC7 and EXOC8. Interacts (via PH domain) with GTP-bound RALA and RALB. Interacts with SH3BP1; required for the localization of both SH3BP1 and the exocyst to the leading edge of migrating cells.

The protein resides in the cytoplasm. It localises to the perinuclear region. It is found in the cell projection. The protein localises to the growth cone. Its function is as follows. Component of the exocyst complex involved in the docking of exocytic vesicles with fusion sites on the plasma membrane. The chain is Exocyst complex component 8 (EXOC8) from Bos taurus (Bovine).